We begin with the raw amino-acid sequence, 429 residues long: MIRSHVSADTMNLNSSRSLYERAKRLMPGGVSSPVRAIRPYPFYVKRAEGPYLWDEDGNSFIDYCLAYGPMILGHRNPEVMRKVEEQIERGWLYGTPTALEVELAERIISHYPSIEMIRFVSTGTEATMAALRIARGFTGKDKIVKIEGGFHGAHDSVLVKAGSGATTIGVPDSKGVPADTAKNTVLVPYNDIQAMEAALREDDVAAVIMEPVLGNIGPVLPMDGYLEGVRRITEEHDALLIFDEVITGFRLALGGAQSYYRVRADITTLGKIIGGGFPIGAVGGRREIMENVAPQGGIYQAGTFNGSPVSMAAGLATLDILERGVLDRINEMGSYLRKGISDIVEDLKLDYSVSGVASMFKVFFGPLPRNYSEALRCDKEGYLRFFWRMLEAGIFLTPSQYETDFISASHDKEIIDKTLEAFKLFLKG.

N6-(pyridoxal phosphate)lysine is present on lysine 272.

The protein belongs to the class-III pyridoxal-phosphate-dependent aminotransferase family. HemL subfamily. It depends on pyridoxal 5'-phosphate as a cofactor.

It is found in the cytoplasm. It catalyses the reaction (S)-4-amino-5-oxopentanoate = 5-aminolevulinate. It functions in the pathway porphyrin-containing compound metabolism; protoporphyrin-IX biosynthesis; 5-aminolevulinate from L-glutamyl-tRNA(Glu): step 2/2. In Methanothrix thermoacetophila (strain DSM 6194 / JCM 14653 / NBRC 101360 / PT) (Methanosaeta thermophila), this protein is Glutamate-1-semialdehyde 2,1-aminomutase.